The chain runs to 364 residues: Medium-wave-sensitive opsin 1 (364 aa).

The segment at 1 to 23 is disordered; sequence MTQPWGPQMLAGGQPPESHEDST. Residues 1-52 lie on the Extracellular side of the membrane; that stretch reads MTQPWGPQMLAGGQPPESHEDSTQASIFTYTNSNSTRGPFEGPNFHIAPRWV. A required for 11-cis-retinal regeneration region spans residues 17-43; that stretch reads ESHEDSTQASIFTYTNSNSTRGPFEGP. Residue Asn-34 is glycosylated (N-linked (GlcNAc...) asparagine). Residues 53-77 traverse the membrane as a helical segment; that stretch reads YHLTSAWMILVVIASVFTNGLVLVA. At 78 to 89 the chain is on the cytoplasmic side; the sequence is TMRFKKLRHPLN. Residues 90–115 form a helical membrane-spanning segment; it reads WILVNLAVADLAETVIASTISVVNQF. Residues 116-129 lie on the Extracellular side of the membrane; that stretch reads YGYFVLGHPLCVVE. A disulfide bond links Cys-126 and Cys-203. Residues 130–149 traverse the membrane as a helical segment; it reads GYTVSLCGITGLWSLAIISW. Topologically, residues 150 to 168 are cytoplasmic; it reads ERWLVVCKPFGNVRFDAKL. The helical transmembrane segment at 169-192 threads the bilayer; it reads AIAGIAFSWIWAAVWTAPPIFGWS. At 193–218 the chain is on the extracellular side; it reads RYWPYGLKTSCGPDVFSGTSYPGVQS. The helical transmembrane segment at 219–246 threads the bilayer; sequence YMMVLMVTCCIIPLSVIVLCYLQVWMAI. At 247–268 the chain is on the cytoplasmic side; the sequence is RTVAKQQKESESTQKAEKEVTR. A helical membrane pass occupies residues 269 to 292; it reads MVVVMVFAYCLCWGPYTFFACFAT. Topologically, residues 293-300 are extracellular; the sequence is AHPGYSFH. Residues 301 to 325 form a helical membrane-spanning segment; that stretch reads PLVAAIPSYFAKSATIYNPIIYVFM. Lys-312 bears the N6-(retinylidene)lysine mark. Topologically, residues 326–364 are cytoplasmic; the sequence is NRQFRNCILQLFGKKVEDSSELSSASRTEASSVSSVSPA.

This sequence belongs to the G-protein coupled receptor 1 family. Opsin subfamily. As to quaternary structure, monomer. Homodimer. Homotetramer. O-glycosylated. Post-translationally, phosphorylated on some or all of the serine and threonine residues present in the C-terminal region. Expressed in cone photoreceptor cells.

The protein localises to the membrane. In terms of biological role, visual pigments are the light-absorbing molecules that mediate vision. They consist of an apoprotein, opsin, covalently linked to cis-retinal. May increase spectral sensitivity in dim light. This is Medium-wave-sensitive opsin 1 (OPN1MW) from Oryctolagus cuniculus (Rabbit).